The following is a 469-amino-acid chain: Arginine biosynthesis bifunctional protein ArgJ, chloroplastic (469 aa).

Residues T213, K239, T250, E337, N464, and T469 each contribute to the substrate site. T250 serves as the catalytic Nucleophile.

It belongs to the ArgJ family. Heterodimer of an alpha and a beta chain.

The protein localises to the plastid. It localises to the chloroplast. The catalysed reaction is N(2)-acetyl-L-ornithine + L-glutamate = N-acetyl-L-glutamate + L-ornithine. It carries out the reaction L-glutamate + acetyl-CoA = N-acetyl-L-glutamate + CoA + H(+). Its pathway is amino-acid biosynthesis; L-arginine biosynthesis; L-ornithine and N-acetyl-L-glutamate from L-glutamate and N(2)-acetyl-L-ornithine (cyclic): step 1/1. It participates in amino-acid biosynthesis; L-arginine biosynthesis; N(2)-acetyl-L-ornithine from L-glutamate: step 1/4. In terms of biological role, catalyzes two activities which are involved in the cyclic version of arginine biosynthesis: the synthesis of acetylglutamate from glutamate and acetyl-CoA, and of ornithine by transacetylation between acetylornithine and glutamate. This is Arginine biosynthesis bifunctional protein ArgJ, chloroplastic from Ricinus communis (Castor bean).